The sequence spans 1044 residues: Integrin alpha-V (1044 aa).

The N-terminal stretch at 1-30 (MAAPGRLLLRPRPGGLLLLLPGLLLPLADA) is a signal peptide. The Extracellular segment spans residues 31 to 988 (FNLDVESPAE…WGIQPAPMPV (958 aa)). FG-GAP repeat units lie at residues 32-98 (NLDV…RRCQ), 109-170 (DYAK…VEYA), 173-225 (RSKN…ISKY), 237-291 (QLAT…GKNM), 292-357 (SSLH…GDFQ), 358-415 (TTKL…GLNS), and 419-482 (QILE…VYPS). The N-linked (GlcNAc...) asparagine glycan is linked to Asn-74. 3 cysteine pairs are disulfide-bonded: Cys-89–Cys-97, Cys-138–Cys-158, and Cys-172–Cys-185. 5 residues coordinate Ca(2+): Asp-260, Asn-262, Asp-264, Ile-266, and Asp-268. N-linked (GlcNAc...) asparagine glycans are attached at residues Asn-290 and Asn-296. Residues Asp-314, Asn-316, Asp-318, Tyr-320, Asp-322, Asp-379, Asp-381, Asp-383, Phe-385, Asp-387, Asp-443, Asp-445, Asn-447, Tyr-449, and Asp-451 each coordinate Ca(2+). 2 disulfides stabilise this stretch: Cys-491/Cys-502 and Cys-508/Cys-565. Asn-615 carries N-linked (GlcNAc...) asparagine glycosylation. 2 disulfide bridges follow: Cys-626-Cys-632 and Cys-698-Cys-711. Residues Asn-704, Asn-835, Asn-851, and Asn-869 are each glycosylated (N-linked (GlcNAc...) asparagine). 2 cysteine pairs are disulfide-bonded: Cys-852–Cys-910 and Cys-900–Cys-905. N-linked (GlcNAc...) asparagine glycans are attached at residues Asn-941, Asn-969, and Asn-976. A helical transmembrane segment spans residues 989–1012 (PVWVIILAVLAGLLLLAVLVFVMY). Residues 1013 to 1044 (RMGFFKRVRPPQEEQEREQLQPHENGEGNSET) lie on the Cytoplasmic side of the membrane. The GFFKR motif signature appears at 1015 to 1019 (GFFKR). Over residues 1023-1038 (PQEEQEREQLQPHENG) the composition is skewed to basic and acidic residues. The interval 1023-1044 (PQEEQEREQLQPHENGEGNSET) is disordered.

The protein belongs to the integrin alpha chain family. Heterodimer of an alpha and a beta subunit. The alpha subunit is composed of a heavy and a light chain linked by a disulfide bond. Alpha-V (ITGAV) associates with either beta-1 (ITGB1), beta-3 (ITGB3), beta-5 (ITGB5), beta-6 (ITGB6) or beta-8 (ITGB8). Interacts with RAB25. Interacts with CIB1. Integrins ITGAV:ITGB3 and ITGAV:ITGB5 interact with FBLN5 (via N-terminus). ITGAV:ITGB3 and ITGAV:ITGB5 interact with CCN3. ITGAV:ITGB3 interacts with ADGRA2. ITGAV:ITGB3 interacts with FGF2; it is likely that FGF2 can simultaneously bind ITGAV:ITGB3 and FGF receptors. ITGAV:ITGB3 interacts with SELP (via C-type lectin domain); the interaction mediates cell-cell interaction and adhesion. ITGAV:ITGB3 is found in a ternary complex with CX3CR1 and CX3CL1. ITGAV:ITGB3 is found in a ternary complex with NRG1 and ERBB3. ITGAV:ITGB3 is found in a ternary complex with FGF1 and FGFR1. ITGAV:ITGB3 is found in a ternary complex with IGF1 and IGF1R. ITGAV:ITGB3 interacts with IGF2. ITGAV:ITGB3 and ITGAV:ITGB6 interact with FBN1. ITGAV:ITGB3 interacts with CD9, CD81 and CD151 (via second extracellular domain). ITGAV:ITGB6 interacts with TGFB1. ITGAV:ITGB3 interacts with PTN. Forms a complex with PTPRZ1 and PTN that stimulates endothelial cell migration through ITGB3 'Tyr-773' phosphorylation. Interacts with TM4SF19.

The protein resides in the cell membrane. The protein localises to the cell junction. Its subcellular location is the focal adhesion. Functionally, the alpha-V (ITGAV) integrins are receptors for vitronectin, cytotactin, fibronectin, fibrinogen, laminin, matrix metalloproteinase-2, osteopontin, osteomodulin, prothrombin, thrombospondin, TGFB1 and vWF. They recognize the sequence R-G-D in a wide array of ligands. Alpha-V integrins may play a role in embryo implantation, angiogenesis and wound healing. ITGAV:ITGB3 binds to fractalkine (CX3CL1) and may act as its coreceptor in CX3CR1-dependent fractalkine signaling. ITGAV:ITGB3 binds to NRG1 (via EGF domain) and this binding is essential for NRG1-ERBB signaling. ITGAV:ITGB3 binds to FGF1 and this binding is essential for FGF1 signaling. ITGAV:ITGB3 binds to FGF2 and this binding is essential for FGF2 signaling. ITGAV:ITGB3 binds to IGF1 and this binding is essential for IGF1 signaling. ITGAV:ITGB3 binds to IGF2 and this binding is essential for IGF2 signaling. ITGAV:ITGB3 binds to IL1B and this binding is essential for IL1B signaling. ITGAV:ITGB3 binds to PLA2G2A via a site (site 2) which is distinct from the classical ligand-binding site (site 1) and this induces integrin conformational changes and enhanced ligand binding to site 1. ITGAV:ITGB3 and ITGAV:ITGB6 act as a receptor for fibrillin-1 (FBN1) and mediate R-G-D-dependent cell adhesion to FBN1. Integrin alpha-V/beta-6 or alpha-V/beta-8 (ITGAV:ITGB6 or ITGAV:ITGB8) mediates R-G-D-dependent release of transforming growth factor beta-1 (TGF-beta-1) from regulatory Latency-associated peptide (LAP), thereby playing a key role in TGF-beta-1 activation. ITGAV:ITGB3 acts as a receptor for CD40LG. ITGAV:ITGB3 binds to the Lilrb4a/Gp49b receptor and enhances the Lilrb4a-mediated inhibition of mast cell activation. ITGAV:ITGB3 also suppresses marginal zone B cell antibody production through its interaction with Lilrb4a. ITGAV:ITGB3 acts as a receptor for IBSP and promotes cell adhesion and migration to IBSP. This Mus musculus (Mouse) protein is Integrin alpha-V (Itgav).